Here is a 51-residue protein sequence, read N- to C-terminus: UPF0391 membrane protein PsycPRwf_2202 (51 aa).

Transmembrane regions (helical) follow at residues 6-26 and 27-47; these read IIFA…VAGL and SQNF…IGFI.

It belongs to the UPF0391 family.

It localises to the cell membrane. In Psychrobacter sp. (strain PRwf-1), this protein is UPF0391 membrane protein PsycPRwf_2202.